We begin with the raw amino-acid sequence, 707 residues long: E3 ubiquitin-protein ligase Praja-2 (707 aa).

Positions 1-10 (MSQYTEKEPS) are enriched in basic and acidic residues. 3 disordered regions span residues 1–32 (MSQY…QTIT), 72–120 (PKEN…PSIA), and 250–314 (QNGQ…VRPK). At Ser2 the chain carries N-acetylserine. 2 stretches are compositionally biased toward polar residues: residues 74–83 (ENTSGSSSLD) and 109–119 (LNQSTESSPSI). The span at 257–276 (RSSEDGVVRKRRQDDTDQGR) shows a compositional bias: basic and acidic residues. Residues 293-308 (EQNTSDRANHHGSSPE) show a composition bias toward polar residues. Residues Ser306 and Ser320 each carry the phosphoserine modification. Ser339 carries the phosphoserine; by PKA modification. Disordered regions lie at residues 379–405 (RVTQ…QESR) and 424–493 (EDSS…QTSL). Residues 381–390 (TQRETERNRV) show a composition bias toward basic and acidic residues. At Thr385 the chain carries Phosphothreonine; by PKA. Residues 391–401 (TSENGATASGR) are compositionally biased toward polar residues. Ser430 is subject to Phosphoserine. Residues 465–481 (NDPELQSDSSGPEEENQ) show a composition bias toward acidic residues. Residues 482–491 (ELSLQEGEQT) are compositionally biased toward polar residues. An interaction with PRKAR1A, PRKAR2A and PRKAR2B region spans residues 530–707 (DGNNNLEDDS…PANDNAEEAP (178 aa)). Residues 549–569 (WSLFDGFADGLGVAEAISYVD) form a mediates interaction with TBC1D31 region. The RING-type; atypical zinc-finger motif lies at 633-674 (CPICCSEYIKDDIATELPCHHFFHKPCVSIWLQKSGTCPVCR). Positions 685-701 (SAAASSDPDPDASPAND) are enriched in low complexity. The disordered stretch occupies residues 685 to 707 (SAAASSDPDPDASPANDNAEEAP).

Binds ubiquitin-conjugating enzymes (E2s). In vitro, interacts with the ubiquitin-conjugating enzyme, UBE2D2. The phosphorylated form interacts with PRKAR1A, PRKAR2A and PRKAR2B. Binds the catalytic subunits of cAMP-dependent protein kinase. Interacts with MFHAS1. Interacts with TBC1D31; the interaction is direct and recruits PJA2 to centrosomes.

The protein resides in the cytoplasm. Its subcellular location is the cell membrane. It is found in the endoplasmic reticulum membrane. The protein localises to the golgi apparatus membrane. It localises to the synapse. The protein resides in the postsynaptic density. Its subcellular location is the cytoskeleton. It is found in the microtubule organizing center. The protein localises to the centrosome. It carries out the reaction S-ubiquitinyl-[E2 ubiquitin-conjugating enzyme]-L-cysteine + [acceptor protein]-L-lysine = [E2 ubiquitin-conjugating enzyme]-L-cysteine + N(6)-ubiquitinyl-[acceptor protein]-L-lysine.. It participates in protein modification; protein ubiquitination. Its function is as follows. Has E2-dependent E3 ubiquitin-protein ligase activity. Responsible for ubiquitination of cAMP-dependent protein kinase type I and type II-alpha/beta regulatory subunits and for targeting them for proteasomal degradation. Essential for PKA-mediated long-term memory processes. Through the ubiquitination of MFHAS1, positively regulates the TLR2 signaling pathway that leads to the activation of the downstream p38 and JNK MAP kinases and promotes the polarization of macrophages toward the pro-inflammatory M1 phenotype. Plays a role in ciliogenesis by ubiquitinating OFD1. In Mus musculus (Mouse), this protein is E3 ubiquitin-protein ligase Praja-2 (Pja2).